The chain runs to 117 residues: MSWRGRSTYYWPRPRRYVQPPEVIGPMRPEQFSDEVEPATPEEGEPATQRQDPAAAQEGEDEGASAGQGPKPEADSQEQGHPQTGCECEDGPDGQEMDPPNPEEVKTPEEGEKQSQC.

The segment at 1–117 (MSWRGRSTYY…PEEGEKQSQC (117 aa)) is disordered. Composition is skewed to acidic residues over residues 32–45 (FSDEVEPATPEEGE) and 87–96 (ECEDGPDGQE). The span at 103-117 (EEVKTPEEGEKQSQC) shows a compositional bias: basic and acidic residues.

This sequence belongs to the GAGE family. Expressed in a variety of tumor tissues but not in normal tissues, except testis.

This chain is G antigen 5 (GAGE5), found in Homo sapiens (Human).